Reading from the N-terminus, the 305-residue chain is Oxygen-dependent coproporphyrinogen-III oxidase (305 aa).

Ser-98 provides a ligand contact to substrate. His-102 and His-112 together coordinate a divalent metal cation. The active-site Proton donor is His-112. 114–116 is a substrate binding site; that stretch reads NVR. 2 residues coordinate a divalent metal cation: His-151 and His-181. Positions 246-281 are important for dimerization; sequence YVEFNLVYDRGTLFGLQSGGRTESILMSMPPLARWE. 264 to 266 lines the substrate pocket; it reads GGR.

This sequence belongs to the aerobic coproporphyrinogen-III oxidase family. Homodimer. A divalent metal cation is required as a cofactor.

Its subcellular location is the cytoplasm. It catalyses the reaction coproporphyrinogen III + O2 + 2 H(+) = protoporphyrinogen IX + 2 CO2 + 2 H2O. The protein operates within porphyrin-containing compound metabolism; protoporphyrin-IX biosynthesis; protoporphyrinogen-IX from coproporphyrinogen-III (O2 route): step 1/1. Functionally, involved in the heme biosynthesis. Catalyzes the aerobic oxidative decarboxylation of propionate groups of rings A and B of coproporphyrinogen-III to yield the vinyl groups in protoporphyrinogen-IX. The chain is Oxygen-dependent coproporphyrinogen-III oxidase from Vibrio campbellii (strain ATCC BAA-1116).